Here is a 444-residue protein sequence, read N- to C-terminus: Na(+)-translocating NADH-quinone reductase subunit A (444 aa).

It belongs to the NqrA family. In terms of assembly, composed of six subunits; NqrA, NqrB, NqrC, NqrD, NqrE and NqrF.

The enzyme catalyses a ubiquinone + n Na(+)(in) + NADH + H(+) = a ubiquinol + n Na(+)(out) + NAD(+). Its function is as follows. NQR complex catalyzes the reduction of ubiquinone-1 to ubiquinol by two successive reactions, coupled with the transport of Na(+) ions from the cytoplasm to the periplasm. NqrA to NqrE are probably involved in the second step, the conversion of ubisemiquinone to ubiquinol. The polypeptide is Na(+)-translocating NADH-quinone reductase subunit A (Shewanella denitrificans (strain OS217 / ATCC BAA-1090 / DSM 15013)).